A 471-amino-acid chain; its full sequence is tRNA-2-methylthio-N(6)-dimethylallyladenosine synthase (471 aa).

The 119-residue stretch at 36 to 154 (KTYHIITYGC…FPQLLYKAIT (119 aa)) folds into the MTTase N-terminal domain. [4Fe-4S] cluster contacts are provided by cysteine 45, cysteine 81, cysteine 115, cysteine 191, cysteine 195, and cysteine 198. The Radical SAM core domain occupies 177–407 (RREGVSAFVN…VKLVEEIALK (231 aa)). The region spanning 410–471 (QQMLGKVCEI…SRHWLYGEVI (62 aa)) is the TRAM domain.

The protein belongs to the methylthiotransferase family. MiaB subfamily. In terms of assembly, monomer. The cofactor is [4Fe-4S] cluster.

It is found in the cytoplasm. The enzyme catalyses N(6)-dimethylallyladenosine(37) in tRNA + (sulfur carrier)-SH + AH2 + 2 S-adenosyl-L-methionine = 2-methylsulfanyl-N(6)-dimethylallyladenosine(37) in tRNA + (sulfur carrier)-H + 5'-deoxyadenosine + L-methionine + A + S-adenosyl-L-homocysteine + 2 H(+). Its function is as follows. Catalyzes the methylthiolation of N6-(dimethylallyl)adenosine (i(6)A), leading to the formation of 2-methylthio-N6-(dimethylallyl)adenosine (ms(2)i(6)A) at position 37 in tRNAs that read codons beginning with uridine. This is tRNA-2-methylthio-N(6)-dimethylallyladenosine synthase from Caldicellulosiruptor saccharolyticus (strain ATCC 43494 / DSM 8903 / Tp8T 6331).